A 684-amino-acid polypeptide reads, in one-letter code: Glycine--tRNA ligase beta subunit (684 aa).

This sequence belongs to the class-II aminoacyl-tRNA synthetase family. Tetramer of two alpha and two beta subunits.

Its subcellular location is the cytoplasm. The catalysed reaction is tRNA(Gly) + glycine + ATP = glycyl-tRNA(Gly) + AMP + diphosphate. This Pseudomonas syringae pv. tomato (strain ATCC BAA-871 / DC3000) protein is Glycine--tRNA ligase beta subunit.